A 199-amino-acid polypeptide reads, in one-letter code: N-(5'-phosphoribosyl)anthranilate isomerase (199 aa).

The protein belongs to the TrpF family.

The catalysed reaction is N-(5-phospho-beta-D-ribosyl)anthranilate = 1-(2-carboxyphenylamino)-1-deoxy-D-ribulose 5-phosphate. Its pathway is amino-acid biosynthesis; L-tryptophan biosynthesis; L-tryptophan from chorismate: step 3/5. In Clostridium kluyveri (strain NBRC 12016), this protein is N-(5'-phosphoribosyl)anthranilate isomerase.